The chain runs to 371 residues: Protein NDRG2 (371 aa).

The disordered stretch occupies residues 1 to 21; it reads MAELQEVQITEEKPLLPGQTP. Alanine 2 is subject to N-acetylalanine. Threonine 20 carries the phosphothreonine modification. Phosphoserine is present on residues serine 326 and serine 328. Threonine 330 is subject to Phosphothreonine. Residue serine 332 is modified to Phosphoserine. Threonine 334 is modified (phosphothreonine). Positions 334-371 are disordered; that stretch reads TSAASVDGNRSRSRTLSQSSESGTLSSGPPGHTMEVSC. A phosphoserine mark is found at serine 335, serine 338, and serine 344. The segment covering 347-361 has biased composition (low complexity); sequence RTLSQSSESGTLSSG. Residue threonine 348 is modified to Phosphothreonine. 4 positions are modified to phosphoserine: serine 350, serine 352, serine 353, and serine 355. Threonine 357 is modified (phosphothreonine). Serine 370 bears the Phosphoserine mark.

It belongs to the NDRG family. In terms of assembly, interacts with CTNNB1. In terms of tissue distribution, highly expressed in brain, heart, skeletal muscle and salivary gland, and moderately in kidney and liver. Expressed in dendritic cells, but not in other blood cells. Expression levels are low in pancreatic and liver cancer tissues; absent in meningioma. Expressed in low-grade gliomas but present at low levels in glioblastoma. Isoform 1 and isoform 2 are present in brain neurons and up-regulated in Alzheimer disease (at protein level).

Its subcellular location is the cytoplasm. The protein resides in the perinuclear region. It is found in the cell projection. The protein localises to the growth cone. Contributes to the regulation of the Wnt signaling pathway. Down-regulates CTNNB1-mediated transcriptional activation of target genes, such as CCND1, and may thereby act as tumor suppressor. May be involved in dendritic cell and neuron differentiation. This Homo sapiens (Human) protein is Protein NDRG2 (NDRG2).